Consider the following 132-residue polypeptide: Small ribosomal subunit protein uS8 (132 aa).

The protein belongs to the universal ribosomal protein uS8 family. In terms of assembly, part of the 30S ribosomal subunit. Contacts proteins S5 and S12.

Its function is as follows. One of the primary rRNA binding proteins, it binds directly to 16S rRNA central domain where it helps coordinate assembly of the platform of the 30S subunit. This is Small ribosomal subunit protein uS8 from Nitrobacter winogradskyi (strain ATCC 25391 / DSM 10237 / CIP 104748 / NCIMB 11846 / Nb-255).